The sequence spans 316 residues: tRNA dimethylallyltransferase (316 aa).

Position 17–24 (17–24 (GPTASGKT)) interacts with ATP. Residue 19–24 (TASGKT) participates in substrate binding. 3 interaction with substrate tRNA regions span residues 42–45 (DSAL), 166–170 (QRLSR), and 247–252 (RCVGYR).

The protein belongs to the IPP transferase family. Monomer. Mg(2+) is required as a cofactor.

It carries out the reaction adenosine(37) in tRNA + dimethylallyl diphosphate = N(6)-dimethylallyladenosine(37) in tRNA + diphosphate. Catalyzes the transfer of a dimethylallyl group onto the adenine at position 37 in tRNAs that read codons beginning with uridine, leading to the formation of N6-(dimethylallyl)adenosine (i(6)A). This Erwinia tasmaniensis (strain DSM 17950 / CFBP 7177 / CIP 109463 / NCPPB 4357 / Et1/99) protein is tRNA dimethylallyltransferase.